The primary structure comprises 41 residues: Large ribosomal subunit protein bL36 (41 aa).

This sequence belongs to the bacterial ribosomal protein bL36 family.

The protein is Large ribosomal subunit protein bL36 of Xanthobacter autotrophicus (strain ATCC BAA-1158 / Py2).